Here is a 471-residue protein sequence, read N- to C-terminus: MTAKFTDYIVKDIGLAEFGRKEISLAETEMPGLMATREEYGPKQPLKGARIAGSLHMTIQTAVLIETLTALGADVRWVSCNIYSTQDHAAAAIAAAGIPVFAIKGESLEDYWDYTARMFDWHGGGTPNMILDDGGDATMYVHLGLRAENGDTAFLDKPGSDEEVIFFALLKKQLKEKPKGYFAEIAKNIRGVSEETTTGVHRLYDMQKAGTLLWPAINVNDSVTKSKFDNLYGCRESLVDGIRRGTDVMMSGKVAMVAGFGDVGKGSAASLRQAGARVMVSEVDPICALQAAMEGYQVVTMEDAAPIADIFVTATGNKDIITIEHMRAMKDRAIVCNIGHFDNEIQIAHLKNLKWDNIKPQVDEITFPDGKRMILLSEGRLVNLGNATGHPSFVMSASFTNQTLAQIELFANNKDGKYKKEVYVLPKSLDEKVARLHLAKIGVKLTELRKDQADYIGVKVEGPFKADHYRY.

Residues Thr-58, Asp-133, and Glu-195 each contribute to the substrate site. 196–198 (TTT) is an NAD(+) binding site. Substrate-binding residues include Lys-225 and Asp-229. Residues Asn-230, 259–264 (GFGDVG), Glu-282, Asn-317, 338–340 (IGH), and Asn-383 contribute to the NAD(+) site.

The protein belongs to the adenosylhomocysteinase family. Requires NAD(+) as cofactor.

It is found in the cytoplasm. The catalysed reaction is S-adenosyl-L-homocysteine + H2O = L-homocysteine + adenosine. Its pathway is amino-acid biosynthesis; L-homocysteine biosynthesis; L-homocysteine from S-adenosyl-L-homocysteine: step 1/1. May play a key role in the regulation of the intracellular concentration of adenosylhomocysteine. This Rhodopseudomonas palustris (strain BisB5) protein is Adenosylhomocysteinase.